We begin with the raw amino-acid sequence, 481 residues long: WASH complex subunit 1 (481 aa).

Residues 1 to 54 (MVRMTQKRYLEGQVYSVPLIQPDLRREEAVHQITDALQYLEMISTDIFTRVSES) are required for WASH complex assembly. Disordered stretches follow at residues 273–417 (SVPA…SGGD) and 429–481 (RRKG…DWEA). Positions 304–341 (APPPPPPPPPPPPEPTHVPVPPPGTSAAPPPPPPPPPM) are enriched in pro residues. The segment at 359-481 (KGAPSEVVQP…AADDEDDWEA (123 aa)) is VCA. In terms of domain architecture, WH2 spans 371-393 (GRASLLESIRNAGGIGKANLRNV). Residues 392-407 (NVKERKMEKKKQKEQE) are compositionally biased toward basic and acidic residues.

Belongs to the WASH1 family. Component of the WASH complex.

The protein resides in the early endosome membrane. It is found in the recycling endosome membrane. Functionally, acts as a nucleation-promoting factor at the surface of endosomes, where it recruits and activates the Arp2/3 complex to induce actin polymerization, playing a key role in the fission of tubules that serve as transport intermediates during endosome sorting. This chain is WASH complex subunit 1, found in Danio rerio (Zebrafish).